Here is a 351-residue protein sequence, read N- to C-terminus: Anthranilate phosphoribosyltransferase (351 aa).

5-phospho-alpha-D-ribose 1-diphosphate-binding positions include Gly-84, 87-88, 95-98, 113-121, and Ala-125; these read GD, NISS, and KHGNRGASS. Gly-84 contacts anthranilate. Ser-97 serves as a coordination point for Mg(2+). Asn-116 is a binding site for anthranilate. Arg-171 is a binding site for anthranilate. 2 residues coordinate Mg(2+): Asp-229 and Lys-230.

It belongs to the anthranilate phosphoribosyltransferase family. In terms of assembly, homodimer. Requires Mg(2+) as cofactor.

The enzyme catalyses N-(5-phospho-beta-D-ribosyl)anthranilate + diphosphate = 5-phospho-alpha-D-ribose 1-diphosphate + anthranilate. It functions in the pathway amino-acid biosynthesis; L-tryptophan biosynthesis; L-tryptophan from chorismate: step 2/5. In terms of biological role, catalyzes the transfer of the phosphoribosyl group of 5-phosphorylribose-1-pyrophosphate (PRPP) to anthranilate to yield N-(5'-phosphoribosyl)-anthranilate (PRA). The chain is Anthranilate phosphoribosyltransferase from Clavibacter sepedonicus (Clavibacter michiganensis subsp. sepedonicus).